A 181-amino-acid chain; its full sequence is Transcription termination/antitermination protein NusG (181 aa).

In terms of domain architecture, KOW spans 130–158; it reads PGETVRVNDGPFSDFNGIVEEVDYEKNRL.

It belongs to the NusG family. In terms of assembly, monomer. Interacts with the transcription termination factor Rho and with RNA polymerase.

Functionally, participates in transcription elongation, termination and antitermination. In the absence of Rho, increases the rate of transcription elongation by the RNA polymerase (RNAP), probably by partially suppressing pausing. In the presence of Rho, modulates most Rho-dependent termination events by interacting with the RNAP to render the complex more susceptible to the termination activity of Rho. May be required to overcome a kinetic limitation of Rho to function at certain terminators. Also involved in ribosomal RNA transcriptional antitermination. This chain is Transcription termination/antitermination protein NusG, found in Buchnera aphidicola subsp. Baizongia pistaciae (strain Bp).